A 501-amino-acid chain; its full sequence is Lysine--tRNA ligase (501 aa).

Mg(2+) contacts are provided by Glu411 and Glu418.

It belongs to the class-II aminoacyl-tRNA synthetase family. Homodimer. Mg(2+) is required as a cofactor.

The protein localises to the cytoplasm. It catalyses the reaction tRNA(Lys) + L-lysine + ATP = L-lysyl-tRNA(Lys) + AMP + diphosphate. The chain is Lysine--tRNA ligase from Thiobacillus denitrificans (strain ATCC 25259 / T1).